The sequence spans 1951 residues: [F-actin]-monooxygenase MICAL2 (1951 aa).

Positions G2–D494 are monooxygenase domain. FAD is bound by residues C97, E116–R118, R123–N125, F183, Y298, and D398. The Calponin-homology (CH) domain occupies D516–E619. S631 carries the phosphoserine modification. The short motif at R660–Q681 is the Nuclear localization signal element. Disordered stretches follow at residues T663–K712 and K891–S921. The segment covering S691–S700 has biased composition (low complexity). Positions A896–H909 are enriched in pro residues. Residues P910 to S921 show a composition bias toward low complexity. The LIM zinc-binding domain occupies D991 to S1053. 8 residues coordinate Zn(2+): C993, C996, H1014, C1017, C1020, C1023, C1043, and H1046. T1052 carries the post-translational modification Phosphoserine. Disordered regions lie at residues S1054–P1141, T1158–T1314, V1348–Q1368, I1383–G1427, H1451–S1476, Q1489–A1580, A1594–P1624, G1678–L1697, S1706–G1731, and P1747–S1766. A compositionally biased stretch (basic and acidic residues) spans A1061 to E1070. 3 stretches are compositionally biased toward polar residues: residues P1129–R1138, H1228–Q1239, and Q1246–A1256. Over residues P1257–S1268 the composition is skewed to pro residues. The span at L1269–P1285 shows a compositional bias: low complexity. Residues D1291–I1306 show a composition bias toward polar residues. The interaction with MAPK1 stretch occupies residues T1314–E1353. Residues P1350–E1359 are compositionally biased toward basic and acidic residues. The segment covering E1532–T1545 has biased composition (basic and acidic residues). Positions L1599–S1616 are enriched in low complexity. Residues G1678–G1688 are compositionally biased toward basic and acidic residues. S1683 is modified (phosphoserine). Over residues S1706–Q1720 the composition is skewed to polar residues. Over residues T1749 to S1759 the composition is skewed to low complexity. The 151-residue stretch at K1789–N1939 folds into the bMERB domain.

The protein belongs to the Mical family. In terms of assembly, interacts with PLXNA4. Interacts with RAB1B. Interacts with MAPK1/ERK2. Interacts with RAB1B, RAB35, RAB8A, RAB10, RAB13 and RAB15 (in their GTP-bound forms); binding to RAB1B and RAB35 is of low affinity compared to other Rab proteins; binding to RAB1B and RAB35 is of low affinity compared to other Rab proteins; at least in case of RAB8A may bind 2 molecules of RAB8A simultaneously through a high and a low affinity binding site, respectively. Requires FAD as cofactor. In terms of tissue distribution, expressed only in testis (at protein level).

It localises to the cytoplasm. The protein localises to the nucleus. It catalyses the reaction L-methionyl-[F-actin] + NADPH + O2 + H(+) = L-methionyl-(R)-S-oxide-[F-actin] + NADP(+) + H2O. Methionine monooxygenase that promotes depolymerization of F-actin by mediating oxidation of residues 'Met-44' and 'Met-47' on actin to form methionine-sulfoxide, resulting in actin filament disassembly and preventing repolymerization. Regulates the disassembly of branched actin networks also by oxidizing ARP3B-containing ARP2/3 complexes leading to ARP3B dissociation from the network. Acts as a key regulator of the SRF signaling pathway elicited by nerve growth factor and serum: mediates oxidation and subsequent depolymerization of nuclear actin, leading to increase MKL1/MRTF-A presence in the nucleus and promote SRF:MKL1/MRTF-A-dependent gene transcription. Does not activate SRF:MKL1/MRTF-A through RhoA. The sequence is that of [F-actin]-monooxygenase MICAL2 from Mus musculus (Mouse).